We begin with the raw amino-acid sequence, 2346 residues long: Nucleoprotein TPR (2346 aa).

4 coiled-coil regions span residues 38–190 (DEYC…HKEI), 217–366 (QLQS…NLES), 395–493 (YAKS…SRQV), and 565–596 (KMLLEQSKNHIRKLDARFAELEDLLTQKNNTV). The disordered stretch occupies residues 622-649 (VDLDDSNLEPNDSALDTSEQPAANFEES). Over residues 629–642 (LEPNDSALDTSEQP) the composition is skewed to polar residues. Coiled-coil stretches lie at residues 643–1158 (AANF…IEAL) and 1196–1247 (EEGR…DELN). The tract at residues 1187-1655 (LNASGLTAAE…SPRTANVKPM (469 aa)) is interacts with Mad1. Threonine 1259, threonine 1302, threonine 1338, and threonine 1390 each carry phosphothreonine. Coiled-coil stretches lie at residues 1281–1536 (TDSN…KRTE) and 1579–1627 (SYDE…GSQQ). Composition is skewed to polar residues over residues 1621–1649 (RQLGSQQSTKPSTSSVAEKGNISESSPRT) and 1657–1667 (GSATVQQSATV). 3 disordered regions span residues 1621–1677 (RQLG…ETPL), 1695–1768 (PTSQ…YMPS), and 1821–2346 (SPRV…GRFP). Residues 1702 to 1722 (AGSSTSTSSSSSSSSTSTTSA) show a composition bias toward low complexity. Residues 1738–1747 (PQQQVHTTGS) show a composition bias toward polar residues. 2 stretches are compositionally biased toward low complexity: residues 1752-1761 (SMASSSPTSS) and 1827-1878 (SSSS…PSSS). Residues 1879–1891 (NVTTTQAGCSSQG) show a composition bias toward polar residues. Residues 1953-2023 (QEDDIQVVDS…QDNNEVDIEV (71 aa)) show a composition bias toward acidic residues. Polar residues predominate over residues 2028-2080 (MQAQEESQSLDNQAIATASASTQENNQSQAITSGSGESSNPVTLPQAEASNWK). The segment covering 2082–2091 (AAASTSTAAA) has biased composition (low complexity). Composition is skewed to polar residues over residues 2097 to 2110 (SVEIVSSPQVSNFC) and 2142 to 2159 (GAASASSPQKQSEAGESS). Residues 2165–2184 (KAADDGGDHADGTDNAREAD) are compositionally biased toward basic and acidic residues. Composition is skewed to polar residues over residues 2193–2223 (ATGQGEDSQPLGNDNPNVGTSQSEVSHNQAN) and 2302–2322 (RDTSPGNIQQNQMSANNNRFA). Basic residues predominate over residues 2323–2332 (QRTRNRRPIR).

The protein belongs to the TPR family. Part of the nuclear pore complex (NPC). Associates with male-specific lethal (MSL) histone acetyltransferase complex. Interacts with Mad2; the interaction is required for efficient recruitment of Mad2 to unattached kinetochore and occurs in a microtubule-independent manner. Interacts with Mad1 (N-terminus). Interacts with Chro, east and Asator; the interaction is part of a macromolecular complex forming the spindle matrix during mitosis. Interacts with Nup98. In males, interacts with histone acetyltransferase mof. Post-translationally, mps1-mediated phosphorylation disrupts interaction with Mad1 during mitosis. In terms of tissue distribution, expressed in salivary glands, fat body, tracheal tube, esophageal tube and anterior ejaculatory duct (at protein level).

The protein localises to the nucleus. Its subcellular location is the nucleus matrix. The protein resides in the nucleus lamina. It localises to the nucleus envelope. It is found in the nucleus membrane. The protein localises to the nuclear pore complex. Its subcellular location is the cytoplasm. The protein resides in the cytoskeleton. It localises to the spindle. It is found in the chromosome. The protein localises to the centromere. Its subcellular location is the kinetochore. The protein resides in the midbody. Component of the nuclear pore complex (NPC), a complex required for the trafficking across the nuclear envelope. Functions as a scaffolding element in the nuclear phase of the NPC. Plays a role in chromosomal organization and gene expression regulation; stimulates transcription by promoting the formation of an open chromatin environment. Binds chromatin to nucleoporin-associated regions (NARs) that define transcriptionally active regions of the genome. Associates with extended chromosomal regions that alternate between domains of high density binding with those of low occupancy. Preferentially binds to NARs of the male X chromosome. In males, together with Nup153, required for the localization of the male-specific lethal (MSL) histone acetyltransferase complex to the X chromosome and therefore for the transcription of dosage compensation genes. In males, restrains dosage-compensated expression at the level of nascent transcription probably by interacting with the MSL complex and by modulating RNA Polymerase II phosphorylation status and activity. During mitosis forms a gel-like spindle matrix complex together with Skeletor (Skel), Chro, east, and Asator embedding the microtubule spindle apparatus. During interphase localizes Mad1 to the nuclear pore complex and thereby might act as a scaffold to assemble the Mad1-C-Mad2 complex, a heterotetramer that catalyzes the structural conversion of open-Mad2 (O-Mad2) into closed-Mad2 (C-Mad2) which is essential for spindle-assembly checkpoint (SAC). During the metaphase-anaphase transition and before chromosome congression, is phosphorylated by Msp-1; this modification releases Mad1 from the nuclear pore complex and thereby promotes assembly of SAC ensuring a timely and effective recruitment of spindle checkpoint proteins like Mad1, Mad2 and Mps1 to unattached kinetochores (KT). In testes, has a role in stem cell asymmetric division and maintenance via regulation of mitotic spindle assembly checkpoint (SAC) complex. This chain is Nucleoprotein TPR, found in Drosophila melanogaster (Fruit fly).